Here is a 559-residue protein sequence, read N- to C-terminus: U-box domain-containing protein 41 (559 aa).

Disordered regions lie at residues 1-30 (MGGNKQRWFSFHQRSSSATTTTLPQHKHDE) and 121-156 (RMDKDPNPSPGQSPGPGDKDPEPEILPPVEENSPSD). Residues 12–24 (HQRSSSATTTTLP) show a composition bias toward polar residues. The region spanning 30–104 (ETPPEFLCPI…FSWCDRQKVD (75 aa)) is the U-box domain. 5 ARM repeats span residues 266–305 (EDLRVSLCTDRILSFLRSLLVSRYNLVQTNAAASVVNLSL), 307–346 (KQNKVKIVRSGFVPLLIDVLKSGTTEAQEHVAGALFSLAL), 348–388 (DENK…HLSL), 390–427 (PSNRTRLVRAGAVPTLLSMVRSGDSTSRILLVLCNLAA), and 428–472 (CPDG…TLCQ).

The enzyme catalyses S-ubiquitinyl-[E2 ubiquitin-conjugating enzyme]-L-cysteine + [acceptor protein]-L-lysine = [E2 ubiquitin-conjugating enzyme]-L-cysteine + N(6)-ubiquitinyl-[acceptor protein]-L-lysine.. It functions in the pathway protein modification; protein ubiquitination. Its function is as follows. Functions as an E3 ubiquitin ligase. This is U-box domain-containing protein 41 (PUB41) from Arabidopsis thaliana (Mouse-ear cress).